The chain runs to 263 residues: Glutathione S-transferase F8, chloroplastic (263 aa).

A chloroplast-targeting transit peptide spans 1–49 (MGAIQARLPLFLSPPSIKHHTFLHSSSSNSNFKIRSNKSSSSSSSSIIM). The 82-residue stretch at 50–131 (ASIKVHGVPM…YLAEEYSEKG (82 aa)) folds into the GST N-terminal domain. Glutathione is bound by residues 60 to 61 (ST), 89 to 90 (HK), 102 to 103 (QI), and 115 to 116 (ES). A GST C-terminal domain is found at 139–263 (CKKVKATTNV…WAKVIDLQKQ (125 aa)). Thr-177 carries the phosphothreonine modification.

This sequence belongs to the GST superfamily. Phi family. Isoform 1 is predominantly expressed in leaves and isoform 2 in roots.

The protein resides in the plastid. It is found in the chloroplast. Its subcellular location is the cytoplasm. The protein localises to the cytosol. The catalysed reaction is RX + glutathione = an S-substituted glutathione + a halide anion + H(+). In vitro, possesses glutathione S-transferase activity toward 1-chloro-2,4-dinitrobenzene (CDNB) and glutathione peroxidase activity toward cumene hydroperoxide and linoleic acid-13-hydroperoxide. May be involved in the conjugation of reduced glutathione to a wide number of exogenous and endogenous hydrophobic electrophiles and have a detoxification role against certain herbicides. In Arabidopsis thaliana (Mouse-ear cress), this protein is Glutathione S-transferase F8, chloroplastic (GSTF8).